We begin with the raw amino-acid sequence, 300 residues long: tRNA dimethylallyltransferase (300 aa).

18 to 25 lines the ATP pocket; sequence GPTATGKS. 20–25 contacts substrate; sequence TATGKS. The tract at residues 43-46 is interaction with substrate tRNA; sequence DSRQ.

It belongs to the IPP transferase family. Monomer. Requires Mg(2+) as cofactor.

It carries out the reaction adenosine(37) in tRNA + dimethylallyl diphosphate = N(6)-dimethylallyladenosine(37) in tRNA + diphosphate. Functionally, catalyzes the transfer of a dimethylallyl group onto the adenine at position 37 in tRNAs that read codons beginning with uridine, leading to the formation of N6-(dimethylallyl)adenosine (i(6)A). The chain is tRNA dimethylallyltransferase from Cyanothece sp. (strain PCC 7425 / ATCC 29141).